The sequence spans 372 residues: MKNNAKEDYRTFSLTTNYSRQMIYRCVTGLQIGFSLFSFIIVCVALPIMYNHVQNTITYVDREMAYCEVRFLYFYCIKFFSTLQRSNDEAALELQYGKMRMTGNRTARGAYGSGASHGFRPTAYGDEITGAPLETECPGCCIPGPPGPRGSSGTPGKPGLPGNAGKPGMPGTTPNQTCPLNQVREPPPCRPCPKGPPGIKGWPGFPGDVGPPGPPGLKGIDGEDGAPGETGPTGPPGYRGGPGAPGDKGPTPEGDLKEGPPGDEGPPGPIGAPGMPGLPGRNGLTGGQGERGWPGVSGESGEPGYPGPEGPMGGQGPPGEPGVCVCQNVDSILLINPGPQPRIRADDYNSDDGYGGSRGGGDRAGYQGYGRK.

An N-terminal signal peptide occupies residues 1 to 45 (MKNNAKEDYRTFSLTTNYSRQMIYRCVTGLQIGFSLFSFIIVCVA). 3 triple-helical region regions span residues 144 to 173 (GPPG…PGTT), 195 to 251 (GPPG…KGPT), and 259 to 324 (GPPG…PGVC). The segment at 144–372 (GPPGPRGSSG…RAGYQGYGRK (229 aa)) is disordered. Residues 185–196 (EPPPCRPCPKGP) are compositionally biased toward pro residues. The segment covering 197-208 (PGIKGWPGFPGD) has biased composition (low complexity). Gly residues-rich tracts occupy residues 237 to 246 (GYRGGPGAPG) and 283 to 292 (GLTGGQGERG). A compositionally biased stretch (low complexity) spans 293–303 (WPGVSGESGEP). The segment covering 353–363 (GYGGSRGGGDR) has biased composition (gly residues).

The protein belongs to the cuticular collagen family. In terms of assembly, collagen polypeptide chains are complexed within the cuticle by disulfide bonds and other types of covalent cross-links.

In terms of biological role, nematode cuticles are composed largely of collagen-like proteins. The cuticle functions both as an exoskeleton and as a barrier to protect the worm from its environment. The polypeptide is Cuticle collagen dpy-10 (dpy-10) (Caenorhabditis elegans).